The chain runs to 514 residues: 2,3-bisphosphoglycerate-independent phosphoglycerate mutase (514 aa).

Asp14 and Ser64 together coordinate Mn(2+). Ser64 (phosphoserine intermediate) is an active-site residue. Residues His125, 155-156 (RD), Arg187, Arg193, 263-266 (RADR), and Lys336 contribute to the substrate site. Mn(2+) contacts are provided by Asp403, His407, Asp444, His445, and His463.

This sequence belongs to the BPG-independent phosphoglycerate mutase family. Monomer. Mn(2+) is required as a cofactor.

The enzyme catalyses (2R)-2-phosphoglycerate = (2R)-3-phosphoglycerate. The protein operates within carbohydrate degradation; glycolysis; pyruvate from D-glyceraldehyde 3-phosphate: step 3/5. In terms of biological role, catalyzes the interconversion of 2-phosphoglycerate and 3-phosphoglycerate. The polypeptide is 2,3-bisphosphoglycerate-independent phosphoglycerate mutase (Escherichia coli O6:H1 (strain CFT073 / ATCC 700928 / UPEC)).